A 314-amino-acid polypeptide reads, in one-letter code: tRNA pseudouridine synthase B (314 aa).

The Nucleophile role is filled by aspartate 41.

Belongs to the pseudouridine synthase TruB family. Type 1 subfamily.

The enzyme catalyses uridine(55) in tRNA = pseudouridine(55) in tRNA. Its function is as follows. Responsible for synthesis of pseudouridine from uracil-55 in the psi GC loop of transfer RNAs. The polypeptide is tRNA pseudouridine synthase B (Prochlorococcus marinus (strain NATL1A)).